Here is a 532-residue protein sequence, read N- to C-terminus: Eukaryotic translation initiation factor 4B1 (532 aa).

3 disordered regions span residues 16-365 (EAER…LEEQ), 401-434 (KKLE…IIRG), and 451-532 (RFRQ…REGW). Over residues 26-35 (AEATAATADT) the composition is skewed to low complexity. Composition is skewed to gly residues over residues 105 to 120 (RLGG…SGGR) and 132 to 147 (WSGG…YGGG). Positions 167-180 (RADEVDDWGKEKKP) are enriched in basic and acidic residues. The short motif at 177-184 (EKKPLPSF) is the Nuclear localization signal 1 element. Residues 193–217 (SGDGGGFGGGGSGFGGGGGGGGGGL) show a composition bias toward gly residues. Residues 237–244 (SSTFGSSF) carry the Nuclear localization signal 2 motif. Low complexity predominate over residues 237–247 (SSTFGSSFGDS). 2 stretches are compositionally biased toward basic and acidic residues: residues 249–263 (QEER…RKVE) and 286–310 (RPRE…EAKK). Residues 315 to 337 (TSRPTSAHSSRPSSAQSNRSESS) are compositionally biased toward low complexity. 4 stretches are compositionally biased toward basic and acidic residues: residues 355–365 (AKPREVLLEEQ), 401–416 (KKLE…KESD), 472–494 (ERTH…ERPR), and 507–520 (NEQR…KERG).

Belongs to the eIF-4 subunit B family. In terms of assembly, homodimer. Nonspherical monomer. mRNA-discriminating component of initiation complexes. In terms of processing, phosphorylated.

The protein localises to the nucleus. Promotes the eIF4F and eIF4A RNA-dependent ATP-hydrolysis activity with different efficiency depending on mRNAs, thus providing mRNA discrimination during initiation of translation. This chain is Eukaryotic translation initiation factor 4B1, found in Arabidopsis thaliana (Mouse-ear cress).